A 140-amino-acid chain; its full sequence is Large ribosomal subunit protein uL14 (140 aa).

Ser17 is subject to Phosphoserine. Phosphotyrosine is present on Tyr38.

It belongs to the universal ribosomal protein uL14 family. Component of the large ribosomal subunit.

The protein resides in the cytoplasm. Component of the large ribosomal subunit. The ribosome is a large ribonucleoprotein complex responsible for the synthesis of proteins in the cell. This Canis lupus familiaris (Dog) protein is Large ribosomal subunit protein uL14 (RPL23).